The primary structure comprises 289 residues: Pyridoxal kinase PdxY (289 aa).

Substrate is bound by residues serine 9 and 44 to 45 (TQ). ATP is bound by residues aspartate 112, alanine 144, glutamate 149, lysine 183, and 210 to 213 (RPLV). Aspartate 225 is a substrate binding site.

The protein belongs to the pyridoxine kinase family. PdxY subfamily. As to quaternary structure, homodimer. The cofactor is Mg(2+).

It carries out the reaction pyridoxal + ATP = pyridoxal 5'-phosphate + ADP + H(+). It participates in cofactor metabolism; pyridoxal 5'-phosphate salvage; pyridoxal 5'-phosphate from pyridoxal: step 1/1. Its function is as follows. Pyridoxal kinase involved in the salvage pathway of pyridoxal 5'-phosphate (PLP). Catalyzes the phosphorylation of pyridoxal to PLP. This chain is Pyridoxal kinase PdxY, found in Proteus mirabilis.